A 282-amino-acid polypeptide reads, in one-letter code: Pyrroline-5-carboxylate reductase (282 aa).

It belongs to the pyrroline-5-carboxylate reductase family.

The catalysed reaction is L-proline + NADP(+) = (S)-1-pyrroline-5-carboxylate + NADPH + 2 H(+). It catalyses the reaction L-proline + NAD(+) = (S)-1-pyrroline-5-carboxylate + NADH + 2 H(+). It functions in the pathway amino-acid biosynthesis; L-proline biosynthesis; L-proline from L-glutamate 5-semialdehyde: step 1/1. This Schizosaccharomyces pombe (strain 972 / ATCC 24843) (Fission yeast) protein is Pyrroline-5-carboxylate reductase (pro3).